Reading from the N-terminus, the 575-residue chain is MDGDRSKRDSYWSTSPGGSTTKLVSDSERSGKVDTWLLILAFTQWALSIATVIICIVIAARQGYSMERYSMTVEALNTSNKEVKESLTSLIRQEVITRAANIQSSVQTGIPVLLNKNSRDVIRLIEKSCNRQELTQLCDSTIAVHHAEGIAPLEPHSFWRCPAGEPYLSSDPEVSLLPGPSLLSGSTTISGCVRLPSLSIGEAIYAYSSNLITQGCADIGKSYQVLQLGYISLNSDMFPDLNPVVSHTYDINDNRKSCSVVATGTRGYQLCSMPIVDERTDYSSDGIEDLVLDILDLKGRTKSHRYSNSEIDLDHPFSALYPSVGSGIATEGSLIFLGYGGLTTPLQGDTKCRIQGCQQVSQDTCNEALKITWLGGKQVVSVLIQVNDYLSERPRIRVTTIPITQNYLGAEGRLLKLGDQVYIYTRSSGWHSQLQIGVLDVSHPLTISWTPHEALSRPGNEDCNWYNTCPKECISGVYTDAYPLSPDAANVATVTLYANTSRVNPTIMYSNTTNIINMLRIKDVQLEAAYTTTSCITHFGKGYCFHIIEINQKSLNTLQPMLFKTSIPKLCKAES.

The segment covering 1–10 (MDGDRSKRDS) has biased composition (basic and acidic residues). The segment at 1–25 (MDGDRSKRDSYWSTSPGGSTTKLVS) is disordered. The Intravirion portion of the chain corresponds to 1 to 37 (MDGDRSKRDSYWSTSPGGSTTKLVSDSERSGKVDTWL). The incorporation in virion stretch occupies residues 10 to 14 (SYWST). Residues 11-24 (YWSTSPGGSTTKLV) are compositionally biased toward polar residues. A helical membrane pass occupies residues 38–58 (LILAFTQWALSIATVIICIVI). The interval 59–140 (AARQGYSMER…RQELTQLCDS (82 aa)) is involved in interaction with F protein. Over 59–575 (AARQGYSMER…SIPKLCKAES (517 aa)) the chain is Virion surface. An N-linked (GlcNAc...) asparagine; by host glycan is attached at Asn77. 4 disulfides stabilise this stretch: Cys192-Cys216, Cys258-Cys271, Cys357-Cys469, and Cys463-Cys473. The segment at 254-259 (NRKSCS) is involved in neuraminidase activity. Asn499 and Asn511 each carry an N-linked (GlcNAc...) asparagine; by host glycan. A disulfide bridge links Cys535 with Cys544.

It belongs to the paramyxoviruses hemagglutinin-neuraminidase family. As to quaternary structure, homotetramer; composed of disulfide-linked homodimers. Interacts with F protein trimer. N-glycosylated; glycans consist of a mixture of high mannose-type oligosaccharides and of complex-type oligosaccharides.

The protein localises to the virion membrane. The protein resides in the host cell membrane. It carries out the reaction Hydrolysis of alpha-(2-&gt;3)-, alpha-(2-&gt;6)-, alpha-(2-&gt;8)- glycosidic linkages of terminal sialic acid residues in oligosaccharides, glycoproteins, glycolipids, colominic acid and synthetic substrates.. Attaches the virus to sialic acid-containing cell receptors and thereby initiating infection. Binding of HN protein to the receptor induces a conformational change that allows the F protein to trigger virion/cell membranes fusion. Functionally, neuraminidase activity ensures the efficient spread of the virus by dissociating the mature virions from the neuraminic acid containing glycoproteins. The chain is Hemagglutinin-neuraminidase (HN) from Cavia cutleri (Guinea pig).